We begin with the raw amino-acid sequence, 183 residues long: A-type ATP synthase subunit E (183 aa).

It belongs to the V-ATPase E subunit family. Has multiple subunits with at least A(3), B(3), C, D, E, F, H, I and proteolipid K(x).

Its subcellular location is the cell membrane. Functionally, component of the A-type ATP synthase that produces ATP from ADP in the presence of a proton gradient across the membrane. This Methanosarcina acetivorans (strain ATCC 35395 / DSM 2834 / JCM 12185 / C2A) protein is A-type ATP synthase subunit E.